Consider the following 483-residue polypeptide: Protein DETOXIFICATION 6 (483 aa).

Transmembrane regions (helical) follow at residues 38-58 (ALPM…SVMV), 69-89 (GVAL…FGLA), 113-133 (FSAI…WFYM), 146-166 (ISKV…AQAV), 187-207 (AITT…AFGL), 211-231 (GAAL…ALYV), 263-283 (AAMT…SGLL), 292-312 (VLSI…GIGA), 334-354 (VFAG…LLFI), 376-396 (LSPL…LGGV), 405-425 (IGAW…GLFL), and 436-456 (LWIG…IVTA).

This sequence belongs to the multi antimicrobial extrusion (MATE) (TC 2.A.66.1) family.

It is found in the membrane. This chain is Protein DETOXIFICATION 6, found in Arabidopsis thaliana (Mouse-ear cress).